We begin with the raw amino-acid sequence, 417 residues long: Gamma-glutamyl phosphate reductase (417 aa).

Belongs to the gamma-glutamyl phosphate reductase family.

It is found in the cytoplasm. It catalyses the reaction L-glutamate 5-semialdehyde + phosphate + NADP(+) = L-glutamyl 5-phosphate + NADPH + H(+). It participates in amino-acid biosynthesis; L-proline biosynthesis; L-glutamate 5-semialdehyde from L-glutamate: step 2/2. In terms of biological role, catalyzes the NADPH-dependent reduction of L-glutamate 5-phosphate into L-glutamate 5-semialdehyde and phosphate. The product spontaneously undergoes cyclization to form 1-pyrroline-5-carboxylate. This is Gamma-glutamyl phosphate reductase from Photorhabdus laumondii subsp. laumondii (strain DSM 15139 / CIP 105565 / TT01) (Photorhabdus luminescens subsp. laumondii).